Here is a 1049-residue protein sequence, read N- to C-terminus: MEPNTMASFDDEHRHSSFSAKICKVCGDEVKDDDNGQTFVACHVCVYPVCKPCYEYERSNGNKCCPQCNTLYKRHKGSPKIAGDEENNGPDDSDDELNIKYRQDGSSIHQNFAYGSENGDYNSKQQWRPNGRAFSSTGSVLGKDFEAERDGYTDAEWKERVDKWKARQEKRGLVTKGEQTNEDKEDDEEEYLDAEARQPLWRKVPISSSKISPYRIVIVLRLVILVFFFRFRILTPAKDAYPLWLISVICEIWFALSWILDQFPKWFPINRETYLDRLSMRFERDGEKNKLAPVDVFVSTVDPLKEPPIITANTILSILAVDYPVNKVSCYVSDDGASMLLFDTLSETSEFARRWVPFCKKYNVEPRAPEFYFSEKIDYLKDKVQTTFVKDRRAMKREYEEFKVRINALVAKAQKKPEEGWVMQDGTPWPGNNTRDHPGMIQVYLGKEGAFDIDGNELPRLVYVSREKRPGYAHHKKAGAMNAMVRVSAVLTNAPFMLNLDCDHYINNSKAIRESMCFLMDPQLGKKLCYVQFPQRFDGIDLNDRYANRNIVFFDINMRGLDGIQGPVYVGTGCVFNRPALYGYEPPVSEKRKKMTCDCWPSWICCCCGGGNRNHKSDSSKKKSGIKSLFSKLKKKTKKKSDDKTMSSYSRKRSSTEAIFDLEDIEEGLEGYDELEKSSLMSQKNFEKRFGMSPVFIASTLMENGGLPEATNTSSLIKEAIHVISCGYEEKTEWGKEIGWIYGSVTEDILTGFRMHCRGWKSVYCMPKRPAFKGSAPINLSDRLHQVLRWALGSVEIFFSRHCPLWYAWGGKLKILERLAYINTIVYPFTSIPLLAYCTIPAVCLLTGKFIIPTINNFASIWFLALFLSIIATAILELRWSGVSINDLWRNEQFWVIGGVSAHLFAVFQGLLKVLFGVDTNFTVTSKGASDEADEFGDLYLFKWTTLLIPPTTLIILNMVGVVAGVSDAINNGYGSWGPLFGKLFFAFWVIVHLYPFLKGLMGRQNRTPTIVVLWSILLASIFSLVWVRIDPFLPKQTGPLLKQCGVDC.

The Cytoplasmic segment spans residues 1-215 (MEPNTMASFD…ISSSKISPYR (215 aa)). C23, C26, C42, C45, C50, C53, C65, and C68 together coordinate Zn(2+). An RING-type; degenerate zinc finger spans residues 23–69 (CKVCGDEVKDDDNGQTFVACHVCVYPVCKPCYEYERSNGNKCCPQCN). Residues 76–98 (KGSPKIAGDEENNGPDDSDDELN) form a disordered region. The span at 84–96 (DEENNGPDDSDDE) shows a compositional bias: acidic residues. Position 135 is a phosphoserine (S135). The helical transmembrane segment at 216–236 (IVIVLRLVILVFFFRFRILTP) threads the bilayer. The Extracellular portion of the chain corresponds to 237-239 (AKD). The chain crosses the membrane as a helical span at residues 240–260 (AYPLWLISVICEIWFALSWIL). The Cytoplasmic segment spans residues 261–831 (DQFPKWFPIN…INTIVYPFTS (571 aa)). Positions 299, 305, 306, and 335 each coordinate UDP-alpha-D-glucose. Residue D335 is part of the active site. Residues 389–416 (VKDRRAMKREYEEFKVRINALVAKAQKK) are a coiled coil. K476 serves as a coordination point for UDP-alpha-D-glucose. Mn(2+) contacts are provided by K477 and D501. The active site involves D748. A helical membrane pass occupies residues 832–852 (IPLLAYCTIPAVCLLTGKFII). Over 853–857 (PTINN) the chain is Extracellular. A helical transmembrane segment spans residues 858 to 878 (FASIWFLALFLSIIATAILEL). Over 879-895 (RWSGVSINDLWRNEQFW) the chain is Cytoplasmic. A helical transmembrane segment spans residues 896 to 916 (VIGGVSAHLFAVFQGLLKVLF). The Extracellular segment spans residues 917 to 945 (GVDTNFTVTSKGASDEADEFGDLYLFKWT). A glycan (N-linked (GlcNAc...) asparagine) is linked at N921. A helical transmembrane segment spans residues 946–966 (TLLIPPTTLIILNMVGVVAGV). The Cytoplasmic portion of the chain corresponds to 967-977 (SDAINNGYGSW). Residues 978–998 (GPLFGKLFFAFWVIVHLYPFL) form a helical membrane-spanning segment. The Extracellular portion of the chain corresponds to 999 to 1007 (KGLMGRQNR). Residues 1008–1028 (TPTIVVLWSILLASIFSLVWV) traverse the membrane as a helical segment. Topologically, residues 1029-1049 (RIDPFLPKQTGPLLKQCGVDC) are cytoplasmic.

This sequence belongs to the glycosyltransferase 2 family. Plant cellulose synthase subfamily. In terms of assembly, interacts with CESA7 and CESA8. Assembly with CESA7 and CESA8 is required for functional complex and localization in secondary cell wall deposition sites. Interacts with STL1 and STL2, but not with GOT1. It depends on Zn(2+) as a cofactor. Requires Mn(2+) as cofactor. Post-translationally, S-acylated. Confined to secondary cell wall developing tissues such as xylems and interfascicular regions. Expressed in roots, hypocotyls, leaves, inflorescences and flowers.

It localises to the cell membrane. The catalysed reaction is [(1-&gt;4)-beta-D-glucosyl](n) + UDP-alpha-D-glucose = [(1-&gt;4)-beta-D-glucosyl](n+1) + UDP + H(+). The protein operates within glycan metabolism; plant cellulose biosynthesis. Catalytic subunit of cellulose synthase terminal complexes ('rosettes'), required for beta-1,4-glucan microfibril crystallization, a major mechanism of the cell wall formation. Involved in the secondary cell wall formation. Required for the xylem cell wall thickening. The sequence is that of Cellulose synthase A catalytic subunit 4 [UDP-forming] from Arabidopsis thaliana (Mouse-ear cress).